The chain runs to 177 residues: Large ribosomal subunit protein uL10 (177 aa).

The protein belongs to the universal ribosomal protein uL10 family. In terms of assembly, part of the ribosomal stalk of the 50S ribosomal subunit. The N-terminus interacts with L11 and the large rRNA to form the base of the stalk. The C-terminus forms an elongated spine to which L12 dimers bind in a sequential fashion forming a multimeric L10(L12)X complex.

In terms of biological role, forms part of the ribosomal stalk, playing a central role in the interaction of the ribosome with GTP-bound translation factors. The sequence is that of Large ribosomal subunit protein uL10 from Thermoanaerobacter pseudethanolicus (strain ATCC 33223 / 39E) (Clostridium thermohydrosulfuricum).